A 356-amino-acid chain; its full sequence is Ribosomal RNA large subunit methyltransferase M (356 aa).

S-adenosyl-L-methionine contacts are provided by residues serine 187, 220–223 (CPGG), aspartate 239, aspartate 259, and aspartate 276. The active-site Proton acceptor is lysine 305.

The protein belongs to the class I-like SAM-binding methyltransferase superfamily. RNA methyltransferase RlmE family. RlmM subfamily. As to quaternary structure, monomer.

It localises to the cytoplasm. It carries out the reaction cytidine(2498) in 23S rRNA + S-adenosyl-L-methionine = 2'-O-methylcytidine(2498) in 23S rRNA + S-adenosyl-L-homocysteine + H(+). In terms of biological role, catalyzes the 2'-O-methylation at nucleotide C2498 in 23S rRNA. The sequence is that of Ribosomal RNA large subunit methyltransferase M from Pseudoalteromonas atlantica (strain T6c / ATCC BAA-1087).